A 122-amino-acid chain; its full sequence is uncharacterized protein (122 aa).

2 helical membrane-spanning segments follow: residues 14-34 and 83-103; these read WLWI…FNNV and IIGV…YFII.

The protein resides in the cell membrane. This is an uncharacterized protein from Ureaplasma parvum serovar 3 (strain ATCC 700970).